We begin with the raw amino-acid sequence, 266 residues long: 2-hydroxyisocaproyl-CoA dehydratase activator (266 aa).

ATP contacts are provided by residues 10-14 (STASK) and 102-104 (GQD). C125 is a [4Fe-4S] cluster binding site. D134 contacts ATP. Position 164 (C164) interacts with [4Fe-4S] cluster. ATP-binding residues include G215 and Q241.

The protein belongs to the HadI activator family. Homodimer. [4Fe-4S] cluster serves as cofactor.

Functionally, involved in the reductive branch of L-leucine fermentation. Required for the activation of (R)-2-hydroxyisocaproyl-CoA dehydratase. The reduced activator transfers one electron to the dehydratase concomitant with hydrolysis of ATP. This protein is extremely sensitive towards oxygen. The chain is 2-hydroxyisocaproyl-CoA dehydratase activator from Clostridioides difficile (Peptoclostridium difficile).